Reading from the N-terminus, the 265-residue chain is 3-methyl-2-oxobutanoate hydroxymethyltransferase (265 aa).

Mg(2+) contacts are provided by aspartate 46 and aspartate 85. Residues 46-47 (DS), aspartate 85, and lysine 114 contribute to the 3-methyl-2-oxobutanoate site. Glutamate 116 contributes to the Mg(2+) binding site. Glutamate 183 serves as the catalytic Proton acceptor.

Belongs to the PanB family. In terms of assembly, homodecamer; pentamer of dimers. It depends on Mg(2+) as a cofactor.

It localises to the cytoplasm. The enzyme catalyses 3-methyl-2-oxobutanoate + (6R)-5,10-methylene-5,6,7,8-tetrahydrofolate + H2O = 2-dehydropantoate + (6S)-5,6,7,8-tetrahydrofolate. Its pathway is cofactor biosynthesis; coenzyme A biosynthesis. In terms of biological role, catalyzes the reversible reaction in which hydroxymethyl group from 5,10-methylenetetrahydrofolate is transferred onto alpha-ketoisovalerate to form ketopantoate. The sequence is that of 3-methyl-2-oxobutanoate hydroxymethyltransferase from Pyrobaculum calidifontis (strain DSM 21063 / JCM 11548 / VA1).